Reading from the N-terminus, the 867-residue chain is Nuclear cap-binding protein subunit 1 (867 aa).

Positions 9–228 (LLRIGDRCPE…DLWERIQVLS (220 aa)) constitute an MIF4G domain. Residues 752–797 (SADGDVPNLRAGDPNVNSSARDPEATTMEIDNENGGDNDSQLNGQN) form a disordered region. A compositionally biased stretch (polar residues) spans 788-797 (DNDSQLNGQN).

This sequence belongs to the NCBP1 family. Component of the nuclear cap-binding complex (CBC), a heterodimer composed of ABH1/CBP80 and CBP20 that interacts with m7GpppG-capped RNA.

It is found in the nucleus. The protein resides in the cytoplasm. Its function is as follows. Component of the cap-binding complex (CBC), which binds cotranscriptionally to the 5'-cap of pre-mRNAs and is involved in various processes such as pre-mRNA splicing and RNA-mediated gene silencing (RNAi) by microRNAs (miRNAs). The CBC complex is involved in miRNA-mediated RNA interference and is required for primary miRNA processing. In the CBC complex, ABH1/CBP80 does not bind directly capped RNAs (m7GpppG-capped RNA) but is required to stabilize the movement of the N-terminal loop of CBP20 and lock the CBC into a high affinity cap-binding state with the cap structure. The sequence is that of Nuclear cap-binding protein subunit 1 (ABH1) from Oryza sativa subsp. japonica (Rice).